Reading from the N-terminus, the 287-residue chain is Inorganic pyrophosphatase (287 aa).

Phosphothreonine is present on threonine 65. Residue arginine 79 coordinates diphosphate. Tyrosine 90 serves as the catalytic Proton donor. Mg(2+) contacts are provided by aspartate 116, aspartate 121, and aspartate 153. A Glycyl lysine isopeptide (Lys-Gly) (interchain with G-Cter in ubiquitin) cross-link involves residue lysine 239. Residue threonine 251 is modified to Phosphothreonine. At serine 266 the chain carries Phosphoserine. Residue lysine 279 forms a Glycyl lysine isopeptide (Lys-Gly) (interchain with G-Cter in ubiquitin) linkage. A Phosphoserine modification is found at serine 286.

This sequence belongs to the PPase family. As to quaternary structure, homodimer. It depends on Mg(2+) as a cofactor.

It localises to the cytoplasm. It catalyses the reaction diphosphate + H2O = 2 phosphate + H(+). The polypeptide is Inorganic pyrophosphatase (IPP1) (Saccharomyces cerevisiae (strain ATCC 204508 / S288c) (Baker's yeast)).